Here is a 428-residue protein sequence, read N- to C-terminus: Serine hydroxymethyltransferase (428 aa).

(6S)-5,6,7,8-tetrahydrofolate is bound by residues Leu127 and 131–133 (GHL). The residue at position 236 (Lys236) is an N6-(pyridoxal phosphate)lysine.

The protein belongs to the SHMT family. In terms of assembly, homodimer. Pyridoxal 5'-phosphate is required as a cofactor.

It localises to the cytoplasm. It catalyses the reaction (6R)-5,10-methylene-5,6,7,8-tetrahydrofolate + glycine + H2O = (6S)-5,6,7,8-tetrahydrofolate + L-serine. It participates in one-carbon metabolism; tetrahydrofolate interconversion. The protein operates within amino-acid biosynthesis; glycine biosynthesis; glycine from L-serine: step 1/1. In terms of biological role, catalyzes the reversible interconversion of serine and glycine with tetrahydrofolate (THF) serving as the one-carbon carrier. This reaction serves as the major source of one-carbon groups required for the biosynthesis of purines, thymidylate, methionine, and other important biomolecules. Also exhibits THF-independent aldolase activity toward beta-hydroxyamino acids, producing glycine and aldehydes, via a retro-aldol mechanism. The sequence is that of Serine hydroxymethyltransferase from Tropheryma whipplei (strain TW08/27) (Whipple's bacillus).